The primary structure comprises 408 residues: uncharacterized protein (408 aa).

4Fe-4S ferredoxin-type domains lie at 42–72 (IPPI…MIYN), 78–107 (KLPV…MDKH), 122–151 (SNLI…RKEG), 151–181 (GKYV…VVDE), 212–241 (KIPH…NEKK), 233–265 (GEID…IYKP), 273–302 (ICYV…ISKE), and 304–333 (KLPY…VVKP). Residues cysteine 52, cysteine 55, cysteine 58, cysteine 62, cysteine 87, cysteine 90, cysteine 93, cysteine 97, cysteine 131, cysteine 134, cysteine 137, cysteine 141, cysteine 160, cysteine 163, cysteine 166, and cysteine 170 each contribute to the [4Fe-4S] cluster site. [4Fe-4S] cluster contacts are provided by cysteine 282, cysteine 285, cysteine 288, and cysteine 292.

This is an uncharacterized protein from Methanocaldococcus jannaschii (strain ATCC 43067 / DSM 2661 / JAL-1 / JCM 10045 / NBRC 100440) (Methanococcus jannaschii).